Consider the following 181-residue polypeptide: Protein Syd (181 aa).

The protein belongs to the Syd family.

The protein localises to the cell inner membrane. Interacts with the SecY protein in vivo. May bind preferentially to an uncomplexed state of SecY, thus functioning either as a chelating agent for excess SecY in the cell or as a regulatory factor that negatively controls the translocase function. This Shigella flexneri protein is Protein Syd.